A 233-amino-acid polypeptide reads, in one-letter code: tRNA (guanine-N(7)-)-methyltransferase (233 aa).

Positions 1-22 (MIDENHPMRAAGNFFGRRHGKP) are disordered. S-adenosyl-L-methionine is bound by residues Glu-64, Glu-89, Asp-116, and Asp-138. Asp-138 is an active-site residue. Substrate-binding positions include Lys-142, Asp-174, and 212–215 (TRYE).

The protein belongs to the class I-like SAM-binding methyltransferase superfamily. TrmB family.

It catalyses the reaction guanosine(46) in tRNA + S-adenosyl-L-methionine = N(7)-methylguanosine(46) in tRNA + S-adenosyl-L-homocysteine. The protein operates within tRNA modification; N(7)-methylguanine-tRNA biosynthesis. In terms of biological role, catalyzes the formation of N(7)-methylguanine at position 46 (m7G46) in tRNA. The sequence is that of tRNA (guanine-N(7)-)-methyltransferase from Brucella abortus (strain 2308).